A 565-amino-acid chain; its full sequence is Oxygen-dependent choline dehydrogenase (565 aa).

Asp6–Glu35 contributes to the FAD binding site. Positions Gln182–Ala203 are disordered. The active-site Proton acceptor is His475.

It belongs to the GMC oxidoreductase family. Requires FAD as cofactor.

The enzyme catalyses choline + A = betaine aldehyde + AH2. It catalyses the reaction betaine aldehyde + NAD(+) + H2O = glycine betaine + NADH + 2 H(+). Its pathway is amine and polyamine biosynthesis; betaine biosynthesis via choline pathway; betaine aldehyde from choline (cytochrome c reductase route): step 1/1. Its function is as follows. Involved in the biosynthesis of the osmoprotectant glycine betaine. Catalyzes the oxidation of choline to betaine aldehyde and betaine aldehyde to glycine betaine at the same rate. The chain is Oxygen-dependent choline dehydrogenase from Pseudomonas entomophila (strain L48).